The sequence spans 382 residues: D-alanine--D-alanine ligase (382 aa).

Positions 161–372 constitute an ATP-grasp domain; sequence KVVFESAGLH…YAELIDELIH (212 aa). Position 193-248 (193-248) interacts with ATP; that stretch reads VDRLGFPVFVKPARAGSSMGISKVDSLEGLDAAIEEARRHDLKLVIEAGIVGREIE. 3 residues coordinate Mg(2+): aspartate 326, glutamate 339, and asparagine 341.

This sequence belongs to the D-alanine--D-alanine ligase family. The cofactor is Mg(2+). Mn(2+) is required as a cofactor.

The protein resides in the cytoplasm. It carries out the reaction 2 D-alanine + ATP = D-alanyl-D-alanine + ADP + phosphate + H(+). It participates in cell wall biogenesis; peptidoglycan biosynthesis. Cell wall formation. In Pseudarthrobacter chlorophenolicus (strain ATCC 700700 / DSM 12829 / CIP 107037 / JCM 12360 / KCTC 9906 / NCIMB 13794 / A6) (Arthrobacter chlorophenolicus), this protein is D-alanine--D-alanine ligase.